A 282-amino-acid chain; its full sequence is NADPH-dependent 7-cyano-7-deazaguanine reductase (282 aa).

90–92 (IES) contacts substrate. 92–93 (SK) contacts NADPH. Residue cysteine 190 is the Thioimide intermediate of the active site. Residue aspartate 197 is the Proton donor of the active site. 229 to 230 (HE) contributes to the substrate binding site. 258 to 259 (RG) is a binding site for NADPH.

It belongs to the GTP cyclohydrolase I family. QueF type 2 subfamily. Homodimer.

Its subcellular location is the cytoplasm. The catalysed reaction is 7-aminomethyl-7-carbaguanine + 2 NADP(+) = 7-cyano-7-deazaguanine + 2 NADPH + 3 H(+). It functions in the pathway tRNA modification; tRNA-queuosine biosynthesis. Catalyzes the NADPH-dependent reduction of 7-cyano-7-deazaguanine (preQ0) to 7-aminomethyl-7-deazaguanine (preQ1). This Aeromonas salmonicida (strain A449) protein is NADPH-dependent 7-cyano-7-deazaguanine reductase.